A 275-amino-acid polypeptide reads, in one-letter code: Lincomycin biosynthesis protein LmbN (275 aa).

One can recognise a Carrier domain in the interval 1–78 (MSTLDEVLAL…AIAATVARIT (78 aa)). S37 carries the O-(pantetheine 4'-phosphoryl)serine modification. The SIS domain maps to 113–275 (LFDTWHAGGT…HHALCVAHAP (163 aa)).

It participates in antibiotic biosynthesis; lincomycin biosynthesis. This chain is Lincomycin biosynthesis protein LmbN (lmbN), found in Streptomyces lincolnensis.